We begin with the raw amino-acid sequence, 373 residues long: Probable dual-specificity RNA methyltransferase RlmN (373 aa).

Catalysis depends on E111, which acts as the Proton acceptor. Residues 117–356 form the Radical SAM core domain; it reads GPGRLTACLS…LRKSYGTSIH (240 aa). A disulfide bond links C124 and C359. [4Fe-4S] cluster is bound by residues C131, C135, and C138. S-adenosyl-L-methionine contacts are provided by residues 183–184, S216, 239–241, and N316; these read GE and SLH. The active-site S-methylcysteine intermediate is the C359.

Belongs to the radical SAM superfamily. RlmN family. [4Fe-4S] cluster is required as a cofactor.

The protein resides in the cytoplasm. It catalyses the reaction adenosine(2503) in 23S rRNA + 2 reduced [2Fe-2S]-[ferredoxin] + 2 S-adenosyl-L-methionine = 2-methyladenosine(2503) in 23S rRNA + 5'-deoxyadenosine + L-methionine + 2 oxidized [2Fe-2S]-[ferredoxin] + S-adenosyl-L-homocysteine. It carries out the reaction adenosine(37) in tRNA + 2 reduced [2Fe-2S]-[ferredoxin] + 2 S-adenosyl-L-methionine = 2-methyladenosine(37) in tRNA + 5'-deoxyadenosine + L-methionine + 2 oxidized [2Fe-2S]-[ferredoxin] + S-adenosyl-L-homocysteine. Specifically methylates position 2 of adenine 2503 in 23S rRNA and position 2 of adenine 37 in tRNAs. This chain is Probable dual-specificity RNA methyltransferase RlmN, found in Chlorobium phaeovibrioides (strain DSM 265 / 1930) (Prosthecochloris vibrioformis (strain DSM 265)).